We begin with the raw amino-acid sequence, 92 residues long: Small ribosomal subunit protein uS17 (92 aa).

Belongs to the universal ribosomal protein uS17 family. Part of the 30S ribosomal subunit.

Functionally, one of the primary rRNA binding proteins, it binds specifically to the 5'-end of 16S ribosomal RNA. In Corynebacterium urealyticum (strain ATCC 43042 / DSM 7109), this protein is Small ribosomal subunit protein uS17.